Here is a 329-residue protein sequence, read N- to C-terminus: MGESTTQPAGGAAVDDETRSAALPRWRGAAGRLEVWYATLSDPLTRTGLWVHCETVAPTTGGPYAHGWVTWFPPDAPPGTERFGPQPAQPAAGPAWFDIAGVRMAPAELTGRTRSLAWELSWKDTAAPLWTFPRVAWERELLPGAQVVIAPTAVFAGSLAVGETTHRVDSWRGSVAHIYGHGNAKRWGWIHADLGDGDVLEVVTAVSHKPGLRRLAPLAFVRFRIDGKDWPASPLPSLRMRTTLGVRHWQLEGRIGGREALIRVDQPPERCVSLGYTDPDGAKAVCTNTEQADIHIELGGRHWSVLGTGHAEVGLRGTAAPAIKEGTPA.

Residues 1–20 (MGESTTQPAGGAAVDDETRS) are disordered.

This is an uncharacterized protein from Mycobacterium tuberculosis (strain CDC 1551 / Oshkosh).